A 148-amino-acid polypeptide reads, in one-letter code: Lipoprotein MlpA (148 aa).

A signal peptide spans 1-17; sequence MKIINILFCLFLLLLNS. Residue cysteine 18 is the site of N-palmitoyl cysteine attachment. Residue cysteine 18 is the site of S-diacylglycerol cysteine attachment. The disordered stretch occupies residues 26 to 58; it reads LKNNAQQTKSRGKRDLTQKEATPEKPKSKEELL. Over residues 38-58 the composition is skewed to basic and acidic residues; that stretch reads KRDLTQKEATPEKPKSKEELL.

It belongs to the Multicopy lipoprotein (Mlp) family.

The protein localises to the cell outer membrane. In terms of biological role, an outer membrane protein that may participate in pathogenesis. Some human Lyme disease patients have antibodies against this protein. The Mlp proteins probably undergo intragenic recombination, generating new alleles. The protein is Lipoprotein MlpA (mlpA) of Borreliella burgdorferi (strain ATCC 35210 / DSM 4680 / CIP 102532 / B31) (Borrelia burgdorferi).